We begin with the raw amino-acid sequence, 700 residues long: Polyribonucleotide nucleotidyltransferase (700 aa).

Mg(2+)-binding residues include D484 and D490. The KH domain occupies 551–610; sequence PRVIRMVVDPEKIREIIGPGGKTISKIIAETGVKIDIEEDGRLYITASDLRSGERAKQMI. An S1 motif domain is found at 620–688; it reads GEIYLGKVLR…KLGRISLSRK (69 aa).

This sequence belongs to the polyribonucleotide nucleotidyltransferase family. It depends on Mg(2+) as a cofactor.

Its subcellular location is the cytoplasm. The catalysed reaction is RNA(n+1) + phosphate = RNA(n) + a ribonucleoside 5'-diphosphate. Its function is as follows. Involved in mRNA degradation. Catalyzes the phosphorolysis of single-stranded polyribonucleotides processively in the 3'- to 5'-direction. The polypeptide is Polyribonucleotide nucleotidyltransferase (Thermoanaerobacter sp. (strain X514)).